Here is a 331-residue protein sequence, read N- to C-terminus: Olfactory receptor 10S1 (331 aa).

Over 1–38 (MTSRSVCEKMTMTTENPNQTVVSHFFLEGLRYTAKHSS) the chain is Extracellular. Asparagine 18 carries N-linked (GlcNAc...) asparagine glycosylation. A helical membrane pass occupies residues 39 to 59 (LFFLLFLLIYSITVAGNLLIL). Topologically, residues 60 to 67 (LTVGSDSH) are cytoplasmic. A helical membrane pass occupies residues 68-88 (LSLPMYHFLGHLSFLDACLST). At 89 to 113 (VTVPKVMAGLLTLDGKVISFEGCAV) the chain is on the extracellular side. The cysteines at positions 111 and 203 are disulfide-linked. A helical membrane pass occupies residues 114 to 134 (QLYCFHFLASTECFLYTVMAY). At 135-153 (DRYLAICQPLHYPVAMNRR) the chain is on the cytoplasmic side. A helical membrane pass occupies residues 154–174 (MCAEMAGITWAIGATHAAIHT). The Extracellular segment spans residues 175-211 (SLTFRLLYCGPCHIAYFFCDIPPVLKLACTDTTINEL). The helical transmembrane segment at 212 to 231 (VMLASIGIVAAGCLILIVIS) threads the bilayer. Topologically, residues 232–251 (YIFIVAAVLRIRTAQGRQRA) are cytoplasmic. Residues 252-272 (FSPCTAQLTGVLLYYVPPVCI) traverse the membrane as a helical segment. At 273–283 (YLQPRSSEAGA) the chain is on the extracellular side. A helical membrane pass occupies residues 284-304 (GAPAVFYTIVTPMLNPFIYTL). The Cytoplasmic portion of the chain corresponds to 305–331 (RNKEVKHALQRLLCSSFRESTAGSPPP).

The protein belongs to the G-protein coupled receptor 1 family.

It localises to the cell membrane. Functionally, odorant receptor. This chain is Olfactory receptor 10S1 (OR10S1), found in Homo sapiens (Human).